Here is a 150-residue protein sequence, read N- to C-terminus: Large ribosomal subunit protein bL9 (150 aa).

Belongs to the bacterial ribosomal protein bL9 family.

In terms of biological role, binds to the 23S rRNA. This Neisseria meningitidis serogroup C (strain 053442) protein is Large ribosomal subunit protein bL9.